Here is a 608-residue protein sequence, read N- to C-terminus: Dextranase (608 aa).

Residues 1-19 form the signal peptide; sequence MATMLKLLALTLAISESAI. A propeptide spanning residues 20–34 is cleaved from the precursor; the sequence is GAVMHPPGNSHPGTH. 3 N-linked (GlcNAc...) asparagine glycosylation sites follow: asparagine 39, asparagine 571, and asparagine 574.

The protein belongs to the glycosyl hydrolase 49 family. In terms of processing, N-glycosylated.

The protein resides in the secreted. It catalyses the reaction Endohydrolysis of (1-&gt;6)-alpha-D-glucosidic linkages in dextran.. The protein is Dextranase (DEX) of Talaromyces minioluteus (Filamentous fungus).